We begin with the raw amino-acid sequence, 189 residues long: Potassium-transporting ATPase KdpC subunit (189 aa).

Residues isoleucine 10 to alanine 30 traverse the membrane as a helical segment.

The protein belongs to the KdpC family. The system is composed of three essential subunits: KdpA, KdpB and KdpC.

The protein resides in the cell inner membrane. Functionally, part of the high-affinity ATP-driven potassium transport (or Kdp) system, which catalyzes the hydrolysis of ATP coupled with the electrogenic transport of potassium into the cytoplasm. This subunit acts as a catalytic chaperone that increases the ATP-binding affinity of the ATP-hydrolyzing subunit KdpB by the formation of a transient KdpB/KdpC/ATP ternary complex. The protein is Potassium-transporting ATPase KdpC subunit of Bacteroides thetaiotaomicron (strain ATCC 29148 / DSM 2079 / JCM 5827 / CCUG 10774 / NCTC 10582 / VPI-5482 / E50).